We begin with the raw amino-acid sequence, 107 residues long: Nucleoid-associated protein Rru_A3472 (107 aa).

Belongs to the YbaB/EbfC family. As to quaternary structure, homodimer.

The protein resides in the cytoplasm. It is found in the nucleoid. Binds to DNA and alters its conformation. May be involved in regulation of gene expression, nucleoid organization and DNA protection. This chain is Nucleoid-associated protein Rru_A3472, found in Rhodospirillum rubrum (strain ATCC 11170 / ATH 1.1.1 / DSM 467 / LMG 4362 / NCIMB 8255 / S1).